The following is an 83-amino-acid chain: Bowman-Birk type seed trypsin and chymotrypsin inhibitor (83 aa).

7 disulfide bridges follow: C18–C72, C19–C34, C22–C68, C24–C32, C42–C49, C46–C61, and C51–C59.

The protein belongs to the Bowman-Birk serine protease inhibitor family.

The protein is Bowman-Birk type seed trypsin and chymotrypsin inhibitor of Vigna unguiculata (Cowpea).